We begin with the raw amino-acid sequence, 62 residues long: Phospholipase A2 superbin a (62 aa).

The Ca(2+) site is built by Y28, G30, and G32. An intrachain disulfide couples C29 to C45. The active site involves H48. D49 provides a ligand contact to Ca(2+).

It depends on Ca(2+) as a cofactor. In terms of tissue distribution, expressed by the venom gland.

It is found in the secreted. It carries out the reaction a 1,2-diacyl-sn-glycero-3-phosphocholine + H2O = a 1-acyl-sn-glycero-3-phosphocholine + a fatty acid + H(+). Its function is as follows. Snake venom phospholipase A2 (PLA2) that inhibits collagen-induced platelet aggregation. In terms of inhibition of platelet aggregation, superbin a is more potent as superbin b, c, and d. PLA2 catalyzes the calcium-dependent hydrolysis of the 2-acyl groups in 3-sn-phosphoglycerides. The polypeptide is Phospholipase A2 superbin a (Austrelaps superbus (Lowland copperhead snake)).